Here is a 287-residue protein sequence, read N- to C-terminus: Inorganic pyrophosphatase (287 aa).

Residue Thr65 is modified to Phosphothreonine. Residue Arg79 coordinates diphosphate. The Proton donor role is filled by Tyr90. Mg(2+) is bound by residues Asp116, Asp121, and Asp153. A Glycyl lysine isopeptide (Lys-Gly) (interchain with G-Cter in ubiquitin) cross-link involves residue Lys239. A Phosphothreonine modification is found at Thr251. Ser266 is modified (phosphoserine). Lys279 is covalently cross-linked (Glycyl lysine isopeptide (Lys-Gly) (interchain with G-Cter in ubiquitin)). Ser286 bears the Phosphoserine mark.

It belongs to the PPase family. In terms of assembly, homodimer. It depends on Mg(2+) as a cofactor.

It localises to the cytoplasm. The catalysed reaction is diphosphate + H2O = 2 phosphate + H(+). In Saccharomyces cerevisiae (strain ATCC 204508 / S288c) (Baker's yeast), this protein is Inorganic pyrophosphatase (IPP1).